Reading from the N-terminus, the 978-residue chain is Glycine dehydrogenase (decarboxylating) (978 aa).

K726 is modified (N6-(pyridoxal phosphate)lysine).

The protein belongs to the GcvP family. The glycine cleavage system is composed of four proteins: P, T, L and H. Requires pyridoxal 5'-phosphate as cofactor.

It carries out the reaction N(6)-[(R)-lipoyl]-L-lysyl-[glycine-cleavage complex H protein] + glycine + H(+) = N(6)-[(R)-S(8)-aminomethyldihydrolipoyl]-L-lysyl-[glycine-cleavage complex H protein] + CO2. In terms of biological role, the glycine cleavage system catalyzes the degradation of glycine. The P protein binds the alpha-amino group of glycine through its pyridoxal phosphate cofactor; CO(2) is released and the remaining methylamine moiety is then transferred to the lipoamide cofactor of the H protein. The polypeptide is Glycine dehydrogenase (decarboxylating) (Paraburkholderia xenovorans (strain LB400)).